A 394-amino-acid chain; its full sequence is Elongation factor Tu (394 aa).

A tr-type G domain is found at 10–204; that stretch reads KPHVNVGTIG…AMDDYIPAPE (195 aa). The interval 19 to 26 is G1; that stretch reads GHVDHGKT. 19-26 contacts GTP; the sequence is GHVDHGKT. Position 26 (Thr-26) interacts with Mg(2+). Residues 60–64 are G2; sequence GITIN. The interval 81–84 is G3; it reads DCPG. GTP is bound by residues 81–85 and 136–139; these read DCPGH and NKCD. Residues 136–139 form a G4 region; it reads NKCD. Residues 174–176 form a G5 region; that stretch reads SAL.

Belongs to the TRAFAC class translation factor GTPase superfamily. Classic translation factor GTPase family. EF-Tu/EF-1A subfamily. In terms of assembly, monomer.

The protein resides in the cytoplasm. The catalysed reaction is GTP + H2O = GDP + phosphate + H(+). Its function is as follows. GTP hydrolase that promotes the GTP-dependent binding of aminoacyl-tRNA to the A-site of ribosomes during protein biosynthesis. The chain is Elongation factor Tu from Francisella tularensis subsp. holarctica (strain FTNF002-00 / FTA).